Here is a 173-residue protein sequence, read N- to C-terminus: T-cell surface glycoprotein CD3 delta chain (173 aa).

The signal sequence occupies residues 1–21 (MEHSGILASLILIAVLPQGSP). Residues 22-105 (FKIQVTEYED…CVELDSGTMA (84 aa)) are Extracellular-facing. A disulfide bridge links Cys-37 with Cys-73. N-linked (GlcNAc...) asparagine glycans are attached at residues Asn-38, Asn-55, and Asn-74. Residues 106–126 (GVIFIDLIATLLLALGVYCFA) traverse the membrane as a helical segment. Over 127-173 (GHETGRPSGAAEVQALLKNEQLYQPLRDREDTQYSRLGGNWPRNKKS) the chain is Cytoplasmic. Residues 138-166 (EVQALLKNEQLYQPLRDREDTQYSRLGGN) enclose the ITAM domain. A phosphotyrosine mark is found at Tyr-149 and Tyr-160.

In terms of assembly, the TCR-CD3 complex is composed of a CD3D/CD3E and a CD3G/CD3E heterodimers that preferentially associate with TCRalpha and TCRbeta, respectively, to form TCRalpha/CD3E/CD3G and TCRbeta/CD3G/CD3E trimers. In turn, the hexamer interacts with CD3Z homodimer to form the TCR-CD3 complex. Alternatively, TCRalpha and TCRbeta can be replaced by TCRgamma and TCRdelta. Interacts with coreceptors CD4 and CD8. Post-translationally, phosphorylated on Tyr residues after T-cell receptor triggering by LCK in association with CD4/CD8.

Its subcellular location is the membrane. Its function is as follows. Part of the TCR-CD3 complex present on T-lymphocyte cell surface that plays an essential role in adaptive immune response. When antigen presenting cells (APCs) activate T-cell receptor (TCR), TCR-mediated signals are transmitted across the cell membrane by the CD3 chains CD3D, CD3E, CD3G and CD3Z. All CD3 chains contain immunoreceptor tyrosine-based activation motifs (ITAMs) in their cytoplasmic domain. Upon TCR engagement, these motifs become phosphorylated by Src family protein tyrosine kinases LCK and FYN, resulting in the activation of downstream signaling pathways. In addition of this role of signal transduction in T-cell activation, CD3D plays an essential role in thymocyte differentiation. Indeed, participates in correct intracellular TCR-CD3 complex assembly and surface expression. In absence of a functional TCR-CD3 complex, thymocytes are unable to differentiate properly. Interacts with CD4 and CD8 and thus serves to establish a functional link between the TCR and coreceptors CD4 and CD8, which is needed for activation and positive selection of CD4 or CD8 T-cells. The sequence is that of T-cell surface glycoprotein CD3 delta chain (Cd3d) from Mus musculus (Mouse).